Consider the following 131-residue polypeptide: MSAKAEKKPASKAPAEKKPAAKKTAPSSDGKKRTKARKETYSSYIYKVLKQTHPDTGISQKSMSILNSFVNDIFERIASEASKLAAYNKKSTISAREIQTAVRLILPGELAKHAVSEGTRAVTKYSSSTQA.

A compositionally biased stretch (basic and acidic residues) spans 1-19 (MSAKAEKKPASKAPAEKKP). Positions 1–38 (MSAKAEKKPASKAPAEKKPAAKKTAPSSDGKKRTKARK) are disordered. N6-acetyllysine; alternate is present on residues K7 and K8. Glycyl lysine isopeptide (Lys-Gly) (interchain with G-Cter in SUMO); alternate cross-links involve residues K7 and K8. Phosphoserine is present on S11. K12 carries the post-translational modification N6-acetyllysine. Position 17 is an N6-acetyllysine; alternate (K17). A Glycyl lysine isopeptide (Lys-Gly) (interchain with G-Cter in SUMO); alternate cross-link involves residue K17. K18 is covalently cross-linked (Glycyl lysine isopeptide (Lys-Gly) (interchain with G-Cter in SUMO)). A Glycyl lysine isopeptide (Lys-Gly) (interchain with G-Cter in ubiquitin) cross-link involves residue K124.

The protein belongs to the histone H2B family. The nucleosome is a histone octamer containing two molecules each of H2A, H2B, H3 and H4 assembled in one H3-H4 heterotetramer and two H2A-H2B heterodimers. The octamer wraps approximately 147 bp of DNA. Post-translationally, monoubiquitinated by the UBC2-BRE1 complex to form H2BK123ub1. H2BK123ub1 gives a specific tag for epigenetic transcriptional activation and is also prerequisite for H3K4me and H3K79me formation. H2BK123ub1 also modulates the formation of double-strand breaks during meiosis and is a prerequisite for DNA-damage checkpoint activation. Phosphorylated by STE20 to form H2BS10ph during progression through meiotic prophase. May be correlated with chromosome condensation. In terms of processing, acetylated by GCN5 to form H2BK11ac and H2BK16ac. H2BK16ac can also be formed by ESA1. Acetylation of N-terminal lysines and particularly formation of H2BK11acK16ac has a positive effect on transcription. Post-translationally, sumoylation to form H2BK6su or H2BK7su, and probably also H2BK16su or H2BK17su, occurs preferentially near the telomeres and represses gene transcription.

The protein localises to the nucleus. Its subcellular location is the chromosome. Functionally, core component of nucleosome. Nucleosomes wrap and compact DNA into chromatin, limiting DNA accessibility to the cellular machineries which require DNA as a template. Histones thereby play a central role in transcription regulation, DNA repair, DNA replication and chromosomal stability. DNA accessibility is regulated via a complex set of post-translational modifications of histones, also called histone code, and nucleosome remodeling. The sequence is that of Histone H2B.2 (HTB2) from Candida glabrata (strain ATCC 2001 / BCRC 20586 / JCM 3761 / NBRC 0622 / NRRL Y-65 / CBS 138) (Yeast).